The sequence spans 126 residues: Putative esterase ComA2 (126 aa).

This sequence belongs to the thioesterase PaaI family.

Functionally, is not required for competence. The sequence is that of Putative esterase ComA2 (yuxO) from Bacillus subtilis (strain 168).